Consider the following 301-residue polypeptide: GTP cyclohydrolase FolE2 (301 aa).

This sequence belongs to the GTP cyclohydrolase IV family.

The enzyme catalyses GTP + H2O = 7,8-dihydroneopterin 3'-triphosphate + formate + H(+). Its pathway is cofactor biosynthesis; 7,8-dihydroneopterin triphosphate biosynthesis; 7,8-dihydroneopterin triphosphate from GTP: step 1/1. Its function is as follows. Converts GTP to 7,8-dihydroneopterin triphosphate. The protein is GTP cyclohydrolase FolE2 of Exiguobacterium sibiricum (strain DSM 17290 / CCUG 55495 / CIP 109462 / JCM 13490 / 255-15).